The chain runs to 418 residues: MNIFEELKTRGLVFQTTDEQALVKALTEGQVSYYTGYDPTADSLHLGHLVAILTSRRLQLAGHKPYALVGGATGLIGDPSFKDAERSLQTKETVLEWSDKIKGQLSTFLDFENGDNKAELVNNYDWFSQISFIDFLRDVGKYFTVNYMMSKDSVKKRIETGISYTEFAYQIMQGYDFYELNDKHNVTLQIGGSDQWGNMTAGTELLRKKADKTGHVMTVPLITDSTGKKFGKSEGNAVWLDADKTSPYEMYQFWLNVMDDDAVRFLKIFTFLSLDEIAEIETQFNAARHERLAQKTLAREVVTLVHGEEAYKQALNITEQLFAGNIKNLSANELKQGLSNVPNYHVQSIDNHNIVEILVAAKISPSKRQAREDVQNGAIYINGDRVQDLDYQLSNDDKIDDQLTVIRRGKKKYAVLTY.

Tyr-34 serves as a coordination point for L-tyrosine. A 'HIGH' region motif is present at residues 39–48; sequence PTADSLHLGH. L-tyrosine-binding residues include Tyr-169 and Gln-173. The 'KMSKS' region motif lies at 229–233; that stretch reads KFGKS. Lys-232 provides a ligand contact to ATP. One can recognise an S4 RNA-binding domain in the interval 352–418; the sequence is HNIVEILVAA…GKKKYAVLTY (67 aa).

Belongs to the class-I aminoacyl-tRNA synthetase family. TyrS type 1 subfamily. Homodimer.

It is found in the cytoplasm. The enzyme catalyses tRNA(Tyr) + L-tyrosine + ATP = L-tyrosyl-tRNA(Tyr) + AMP + diphosphate + H(+). In terms of biological role, catalyzes the attachment of tyrosine to tRNA(Tyr) in a two-step reaction: tyrosine is first activated by ATP to form Tyr-AMP and then transferred to the acceptor end of tRNA(Tyr). This is Tyrosine--tRNA ligase from Streptococcus pyogenes serotype M49 (strain NZ131).